We begin with the raw amino-acid sequence, 155 residues long: Protein U1 (155 aa).

Belongs to the nanovirus U1 protein family.

In Cicer arietinum (Chickpea), this protein is Protein U1 (DNA-U1).